Consider the following 231-residue polypeptide: UPF0653 protein C607.02c (231 aa).

Disordered regions lie at residues 1 to 33 (MPTK…VDDN), 47 to 68 (YHES…KKDY), 93 to 132 (SFKS…ENFE), and 147 to 178 (IESR…APPE). Positions 9 to 27 (SVLEAERKKIGLDHAPKED) are enriched in basic and acidic residues. 2 stretches are compositionally biased toward basic residues: residues 53-67 (KEIK…KKKD) and 109-119 (EKKKIAKRKEK).

The protein belongs to the UPF0653 family.

It localises to the nucleus. The protein resides in the nucleolus. The chain is UPF0653 protein C607.02c from Schizosaccharomyces pombe (strain 972 / ATCC 24843) (Fission yeast).